Consider the following 225-residue polypeptide: Endo-1,4-beta-xylanase (225 aa).

An N-terminal signal peptide occupies residues 1 to 31 (MVGFTPVALAALAATGALAFPAGNATELEKR). At Gln-32 the chain carries Pyrrolidone carboxylic acid. In terms of domain architecture, GH11 spans 32–222 (QTTPNSEGWH…SSGYARITVA (191 aa)). Glu-117 acts as the Nucleophile in catalysis. Cys-141 and Cys-185 are joined by a disulfide. The Proton donor role is filled by Glu-209.

The catalysed reaction is Endohydrolysis of (1-&gt;4)-beta-D-xylosidic linkages in xylans.. It participates in glycan degradation; xylan degradation. This chain is Endo-1,4-beta-xylanase (XYNA), found in Thermomyces lanuginosus (Humicola lanuginosa).